An 86-amino-acid chain; its full sequence is Acyl carrier protein (86 aa).

One can recognise a Carrier domain in the interval Asp10 to Gln85. At Ser45 the chain carries O-(pantetheine 4'-phosphoryl)serine.

This sequence belongs to the acyl carrier protein (ACP) family. In terms of processing, 4'-phosphopantetheine is transferred from CoA to a specific serine of apo-ACP by AcpS. This modification is essential for activity because fatty acids are bound in thioester linkage to the sulfhydryl of the prosthetic group.

The protein resides in the cytoplasm. It functions in the pathway lipid metabolism; fatty acid biosynthesis. Its function is as follows. Carrier of the growing fatty acid chain in fatty acid biosynthesis. The sequence is that of Acyl carrier protein from Rickettsia prowazekii (strain Madrid E).